We begin with the raw amino-acid sequence, 377 residues long: Molybdenum import ATP-binding protein ModC (377 aa).

The ABC transporter domain maps to 4 to 240; sequence IAPRSIRGEF…PALPLATARD (237 aa). Residue 38-45 participates in ATP binding; that stretch reads GPSGCGKS. Residues 299–369 form the Mop domain; the sequence is RTSILNILPA…IKGVALAPER (71 aa).

The protein belongs to the ABC transporter superfamily. Molybdate importer (TC 3.A.1.8) family. In terms of assembly, the complex is composed of two ATP-binding proteins (ModC), two transmembrane proteins (ModB) and a solute-binding protein (ModA).

It localises to the cell inner membrane. The enzyme catalyses molybdate(out) + ATP + H2O = molybdate(in) + ADP + phosphate + H(+). Its function is as follows. Part of the ABC transporter complex ModABC involved in molybdenum import. Responsible for energy coupling to the transport system. The chain is Molybdenum import ATP-binding protein ModC from Rhodopseudomonas palustris (strain HaA2).